A 272-amino-acid polypeptide reads, in one-letter code: uncharacterized protein (272 aa).

Catalysis depends on residues Asp-71 and Glu-163.

This sequence belongs to the glycosyl hydrolase 25 family.

This is an uncharacterized protein from Escherichia coli O6:H1 (strain CFT073 / ATCC 700928 / UPEC).